A 1196-amino-acid chain; its full sequence is Nucleolar protein 6 (1196 aa).

2 disordered regions span residues 1–74 (MPGK…NVKP) and 1140–1196 (KREQ…KALK). 2 stretches are compositionally biased toward basic and acidic residues: residues 22–31 (HAEDHSDLEH) and 65–74 (HRGDTKNVKP). A compositionally biased stretch (basic residues) spans 1165-1187 (KPKKHGKRKGTGKAAPPKKKRLI).

This sequence belongs to the NRAP family. As to quaternary structure, part of the small subunit (SSU) processome, composed of more than 70 proteins and the RNA chaperone small nucleolar RNA (snoRNA) U3.

The protein resides in the nucleus. The protein localises to the nucleolus. It localises to the chromosome. Part of the small subunit (SSU) processome, first precursor of the small eukaryotic ribosomal subunit. During the assembly of the SSU processome in the nucleolus, many ribosome biogenesis factors, an RNA chaperone and ribosomal proteins associate with the nascent pre-rRNA and work in concert to generate RNA folding, modifications, rearrangements and cleavage as well as targeted degradation of pre-ribosomal RNA by the RNA exosome. This chain is Nucleolar protein 6, found in Drosophila simulans (Fruit fly).